Reading from the N-terminus, the 325-residue chain is Ribosomal RNA small subunit methyltransferase H (325 aa).

S-adenosyl-L-methionine-binding positions include 38-40 (GGY), D55, F82, D103, and Q110. 2 disordered regions span residues 256–275 (SGGD…AARA) and 281–307 (PARK…RSAV).

This sequence belongs to the methyltransferase superfamily. RsmH family.

It is found in the cytoplasm. The enzyme catalyses cytidine(1402) in 16S rRNA + S-adenosyl-L-methionine = N(4)-methylcytidine(1402) in 16S rRNA + S-adenosyl-L-homocysteine + H(+). In terms of biological role, specifically methylates the N4 position of cytidine in position 1402 (C1402) of 16S rRNA. This Sphingopyxis alaskensis (strain DSM 13593 / LMG 18877 / RB2256) (Sphingomonas alaskensis) protein is Ribosomal RNA small subunit methyltransferase H.